The primary structure comprises 98 residues: Protein S100-A13 (98 aa).

In terms of domain architecture, EF-hand spans 18–53 (TTFFTFARQEGRKDSLSVNEFKELVTQQLPHLLKDV). The Ca(2+) site is built by S32, E37, D64, N66, D68, E70, and E75. S32 carries the post-translational modification Phosphoserine.

It belongs to the S-100 family. Homodimer. Part of a copper-dependent multiprotein complex containing S100A13, FGF1 and SYT1. Interacts with FGF1 and SYT1. Interacts with IL1A. In terms of tissue distribution, expressed in heart and skeletal muscle.

It is found in the cytoplasm. Its subcellular location is the secreted. In terms of biological role, plays a role in the export of proteins that lack a signal peptide and are secreted by an alternative pathway. Binds two calcium ions per subunit. Binds one copper ion. Binding of one copper ion does not interfere with calcium binding. Required for the copper-dependent stress-induced export of IL1A and FGF1. The calcium-free protein binds to lipid vesicles containing phosphatidylserine, but not to vesicles containing phosphatidylcholine. The polypeptide is Protein S100-A13 (S100A13) (Homo sapiens (Human)).